The primary structure comprises 115 residues: Non-specific lipid-transfer protein 3 (115 aa).

Residues 1–23 (MAFALRFFTCLVLTVCIVASVDA) form the signal peptide. Cystine bridges form between Cys-27/Cys-74, Cys-37/Cys-51, Cys-52/Cys-97, and Cys-72/Cys-111.

Belongs to the plant LTP family.

In terms of biological role, plant non-specific lipid-transfer proteins transfer phospholipids as well as galactolipids across membranes. May play a role in wax or cutin deposition in the cell walls of expanding epidermal cells and certain secretory tissues. This chain is Non-specific lipid-transfer protein 3 (LTP3), found in Arabidopsis thaliana (Mouse-ear cress).